The following is a 649-amino-acid chain: Lipolysis-stimulated lipoprotein receptor (649 aa).

Gly residues predominate over residues 1-16 (MQQDGLGVGTRNGSGK). Residues 1–21 (MQQDGLGVGTRNGSGKGRSVH) are disordered. Residues 1–259 (MQQDGLGVGT…PGFQAGPIED (259 aa)) are Extracellular-facing. One can recognise an Ig-like V-type domain in the interval 86–234 (PARAIQVTVS…DLQGNNEAYA (149 aa)). A disulfide bridge links Cys111 with Cys218. Residues 260–280 (WLFVVVVCLAAFLIFLLLGIC) form a helical membrane-spanning segment. Topologically, residues 281–649 (WCQCCPHTCC…LALSRESLVV (369 aa)) are cytoplasmic. Phosphothreonine is present on Thr336. Phosphoserine occurs at positions 365, 371, 389, 432, and 436. Positions 414-649 (NFDPSRPGPP…LALSRESLVV (236 aa)) are disordered. The span at 426–444 (RVERAMSEVTSLHEDDWRS) shows a compositional bias: basic and acidic residues. Thr453 carries the post-translational modification Phosphothreonine. 3 positions are modified to phosphoserine: Ser464, Ser467, and Ser493. A Phosphothreonine modification is found at Thr501. Residues 502–518 (PPSTAESGSRSPTSNGG) are compositionally biased toward polar residues. Ser528 and Ser530 each carry phosphoserine. Over residues 529-565 (RSRDDLYDQDDSRDFPRSRDPHYDDFRSRERPPADPR) the composition is skewed to basic and acidic residues. At Tyr535 the chain carries Phosphotyrosine. Ser540 and Ser579 each carry phosphoserine. A compositionally biased stretch (basic and acidic residues) spans 589-609 (RLLEEAVRKKGSEERRRPHKE). Position 631 is a phosphoserine (Ser631). Lys638 participates in a covalent cross-link: Glycyl lysine isopeptide (Lys-Gly) (interchain with G-Cter in ubiquitin). A phosphoserine mark is found at Ser643 and Ser646.

It belongs to the immunoglobulin superfamily. LISCH7 family. Homotrimer or homotetramer. Assembles into cell-cell contacts. Interacts (via the cytoplasmic domain) with MARVELD2 (via C-terminal cytoplasmic domain); the interaction is required to recruit MARVELD2 to tricellular contacts. Interacts with OCLN. Phosphorylation at Ser-365 by MAPK8/JNK1 and MAPK9/JNK2 may be required for exclusive localization at tricellular tight junstions. In terms of processing, polyubiquitinated at Lys-638 via 'Lys-63'-linked ubiquitin chains; deubiquitinated by USP53.

It is found in the cell membrane. Its subcellular location is the cell junction. The protein resides in the tight junction. Its function is as follows. Probable role in the clearance of triglyceride-rich lipoprotein from blood. Binds chylomicrons, LDL and VLDL in presence of free fatty acids and allows their subsequent uptake in the cells. Maintains epithelial barrier function by recruiting MARVELD2/tricellulin to tricellular tight junctions. This Homo sapiens (Human) protein is Lipolysis-stimulated lipoprotein receptor.